Consider the following 853-residue polypeptide: DNA topoisomerase 1 (853 aa).

One can recognise a Toprim domain in the interval 3-136 (KSLVIVESPV…KFRRVVFNEI (134 aa)). Residues E9 and D105 each contribute to the Mg(2+) site. Positions 152–565 (NMNRVYSQQA…SFFDNFSQQL (414 aa)) constitute a Topo IA-type catalytic domain. The tract at residues 186-191 (SAGRVQ) is interaction with DNA. Catalysis depends on Y313, which acts as the O-(5'-phospho-DNA)-tyrosine intermediate. 3 C4-type zinc fingers span residues 589 to 621 (CSLC…EKRC), 649 to 676 (CKKC…NPSC), and 699 to 724 (CEKC…NDTC).

It belongs to the type IA topoisomerase family. As to quaternary structure, monomer. The cofactor is Mg(2+).

It carries out the reaction ATP-independent breakage of single-stranded DNA, followed by passage and rejoining.. Functionally, releases the supercoiling and torsional tension of DNA, which is introduced during the DNA replication and transcription, by transiently cleaving and rejoining one strand of the DNA duplex. Introduces a single-strand break via transesterification at a target site in duplex DNA. The scissile phosphodiester is attacked by the catalytic tyrosine of the enzyme, resulting in the formation of a DNA-(5'-phosphotyrosyl)-enzyme intermediate and the expulsion of a 3'-OH DNA strand. The free DNA strand then undergoes passage around the unbroken strand, thus removing DNA supercoils. Finally, in the religation step, the DNA 3'-OH attacks the covalent intermediate to expel the active-site tyrosine and restore the DNA phosphodiester backbone. The protein is DNA topoisomerase 1 of Buchnera aphidicola subsp. Schizaphis graminum (strain Sg).